Here is a 209-residue protein sequence, read N- to C-terminus: uncharacterized protein (209 aa).

Belongs to the flavoredoxin family. FMN is required as a cofactor.

This is an uncharacterized protein from Halalkalibacterium halodurans (strain ATCC BAA-125 / DSM 18197 / FERM 7344 / JCM 9153 / C-125) (Bacillus halodurans).